A 558-amino-acid chain; its full sequence is Eukaryotic translation initiation factor 3 subunit D (558 aa).

The RNA gate stretch occupies residues 296 to 310 (EFDLLTVNETSVEPP). Positions 534 to 558 (DNTFESEGEEEDSDEEEQVKDAFQR) are disordered. The segment covering 537-551 (FESEGEEEDSDEEEQ) has biased composition (acidic residues).

Belongs to the eIF-3 subunit D family. In terms of assembly, component of the eukaryotic translation initiation factor 3 (eIF-3) complex.

The protein resides in the cytoplasm. In terms of biological role, mRNA cap-binding component of the eukaryotic translation initiation factor 3 (eIF-3) complex, which is involved in protein synthesis of a specialized repertoire of mRNAs and, together with other initiation factors, stimulates binding of mRNA and methionyl-tRNAi to the 40S ribosome. The eIF-3 complex specifically targets and initiates translation of a subset of mRNAs involved in cell proliferation. In the eIF-3 complex, eif3d specifically recognizes and binds the 7-methylguanosine cap of a subset of mRNAs. In Nasonia vitripennis (Parasitic wasp), this protein is Eukaryotic translation initiation factor 3 subunit D.